The sequence spans 290 residues: MRFFKQTSTNLNQLLYGIDPRGSKRGRDAYLYYRSTTQSGHHKRTWVHTFFRILQYNKFLYMPSKASGHDTYGHHTVSSKGSTHKFKRALHSINMNNMRIFLYAFWYIRDPRSYRLSGISFSTDGGIQTLPVTRRFHLMRLYLAADFKEFFTLDLRWVNSIRYIENIQKIRSFTLVSYVPNILNGRPLFARARGSACLVRYRNKLQHLGLIWVKLPSGKYRRVSNGNSVLLGKIAPKLRSELGNTRAGYWVNRGIKPQVRGIVKNPVDHPNGGRARSIARHRSPWGWFTK.

The protein belongs to the universal ribosomal protein uL2 family. As to quaternary structure, probably part of the large ribosomal subunit.

It is found in the hydrogenosome. This chain is Large ribosomal subunit protein uL2m (rpl2), found in Nyctotherus ovalis.